The primary structure comprises 144 residues: 3-dehydroquinate dehydratase (144 aa).

Tyr-22 (proton acceptor) is an active-site residue. Asn-73, His-79, and Asp-86 together coordinate substrate. Catalysis depends on His-99, which acts as the Proton donor. Residues 100 to 101 (IS) and Arg-110 each bind substrate.

The protein belongs to the type-II 3-dehydroquinase family. Homododecamer.

It carries out the reaction 3-dehydroquinate = 3-dehydroshikimate + H2O. The protein operates within metabolic intermediate biosynthesis; chorismate biosynthesis; chorismate from D-erythrose 4-phosphate and phosphoenolpyruvate: step 3/7. In terms of biological role, catalyzes a trans-dehydration via an enolate intermediate. The chain is 3-dehydroquinate dehydratase from Mycobacteroides abscessus (strain ATCC 19977 / DSM 44196 / CCUG 20993 / CIP 104536 / JCM 13569 / NCTC 13031 / TMC 1543 / L948) (Mycobacterium abscessus).